The chain runs to 1627 residues: DNA topoisomerase 2-beta (1627 aa).

Residues N117, N146, 174 to 176 (SSN), and 187 to 194 (GRNGYGAK) contribute to the ATP site. The tract at residues 368 to 370 (KKK) is interaction with DNA. 402–404 (QTK) provides a ligand contact to ATP. The Toprim domain occupies 481-598 (CTLILTEGDS…SLLKHGFLEE (118 aa)). Mg(2+) is bound by residues E487, D567, and D569. The Topo IIA-type catalytic domain maps to 741 to 1194 (IPSLVDGLKP…SASDLWKEDL (454 aa)). Y831 (O-(5'-phospho-DNA)-tyrosine intermediate) is an active-site residue. The interval 1016–1025 (KLQTSLTCNS) is interaction with DNA. Disordered regions lie at residues 1115–1144 (AWKE…GSTS), 1224–1248 (KVGK…RRIV), 1283–1365 (EFGG…DSLL), and 1378–1627 (DFSK…DMFN). Residues 1131 to 1144 (NANDDASSASGSTS) are compositionally biased toward low complexity. Polar residues predominate over residues 1296 to 1305 (TVNTAASGTK). The span at 1339–1349 (PWSDDESKSES) shows a compositional bias: basic and acidic residues. Composition is skewed to acidic residues over residues 1381 to 1392 (KEEDDAHDDDDA) and 1412 to 1428 (REDE…DEYD). Basic and acidic residues-rich tracts occupy residues 1436 to 1448 (PSPE…KKNQ) and 1462 to 1471 (KTDDDTTKLD). 2 stretches are compositionally biased toward basic residues: residues 1542-1552 (GKGRGAKKRKT) and 1566-1578 (KAPK…KSKK). Positions 1616-1627 (ESDEDDDFDMFN) are enriched in acidic residues.

It belongs to the type II topoisomerase family. In terms of assembly, homodimer. Requires Mg(2+) as cofactor. The cofactor is Mn(2+). Ca(2+) serves as cofactor.

Its subcellular location is the nucleus. It localises to the nucleolus. The protein resides in the nucleoplasm. It catalyses the reaction ATP-dependent breakage, passage and rejoining of double-stranded DNA.. Key decatenating enzyme that alters DNA topology by binding to two double-stranded DNA molecules, generating a double-stranded break in one of the strands, passing the intact strand through the broken strand, and religating the broken strand. Plays a role in B-cell differentiation. The sequence is that of DNA topoisomerase 2-beta (TOP2B) from Gallus gallus (Chicken).